Consider the following 491-residue polypeptide: Probable glycine dehydrogenase (decarboxylating) subunit 2 (491 aa).

The residue at position 273 (K273) is an N6-(pyridoxal phosphate)lysine.

It belongs to the GcvP family. C-terminal subunit subfamily. The glycine cleavage system is composed of four proteins: P, T, L and H. In this organism, the P 'protein' is a heterodimer of two subunits. It depends on pyridoxal 5'-phosphate as a cofactor.

The enzyme catalyses N(6)-[(R)-lipoyl]-L-lysyl-[glycine-cleavage complex H protein] + glycine + H(+) = N(6)-[(R)-S(8)-aminomethyldihydrolipoyl]-L-lysyl-[glycine-cleavage complex H protein] + CO2. In terms of biological role, the glycine cleavage system catalyzes the degradation of glycine. The P protein binds the alpha-amino group of glycine through its pyridoxal phosphate cofactor; CO(2) is released and the remaining methylamine moiety is then transferred to the lipoamide cofactor of the H protein. The protein is Probable glycine dehydrogenase (decarboxylating) subunit 2 of Bacillus cereus (strain G9842).